The following is a 387-amino-acid chain: 26S proteasome regulatory subunit 6B homolog (387 aa).

175–182 (GPPGTGKT) is a binding site for ATP.

The protein belongs to the AAA ATPase family. In terms of assembly, the 26S proteasome consists of a 20S proteasome core and two 19S regulatory subunits. The 20S proteasome core is composed of 28 subunits that are arranged in four stacked rings, resulting in a barrel-shaped structure. The two end rings are each formed by seven alpha subunits, and the two central rings are each formed by seven beta subunits. The catalytic chamber with the active sites is on the inside of the barrel.

The protein localises to the cytoplasm. It localises to the nucleus. Functionally, acts as a regulatory subunit of the 26S proteasome which degrades poly-ubiquitinated proteins in the cytoplasm and in the nucleus. It is essential for the regulated turnover of proteins and for the removal of misfolded proteins. The proteasome is a multicatalytic proteinase complex that is characterized by its ability to cleave peptides with Arg, Phe, Tyr, Leu, and Glu adjacent to the leaving group at neutral or slightly basic pH. In Encephalitozoon cuniculi (strain GB-M1) (Microsporidian parasite), this protein is 26S proteasome regulatory subunit 6B homolog.